Reading from the N-terminus, the 73-residue chain is UPF0346 protein lp_1865 (73 aa).

It belongs to the UPF0346 family.

This Lactiplantibacillus plantarum (strain ATCC BAA-793 / NCIMB 8826 / WCFS1) (Lactobacillus plantarum) protein is UPF0346 protein lp_1865.